The sequence spans 454 residues: Phosphoglucosamine mutase (454 aa).

Residue S104 is the Phosphoserine intermediate of the active site. 4 residues coordinate Mg(2+): S104, D244, D246, and D248. The residue at position 104 (S104) is a Phosphoserine.

It belongs to the phosphohexose mutase family. It depends on Mg(2+) as a cofactor. Post-translationally, activated by phosphorylation.

It carries out the reaction alpha-D-glucosamine 1-phosphate = D-glucosamine 6-phosphate. Functionally, catalyzes the conversion of glucosamine-6-phosphate to glucosamine-1-phosphate. In Lacticaseibacillus paracasei (strain ATCC 334 / BCRC 17002 / CCUG 31169 / CIP 107868 / KCTC 3260 / NRRL B-441) (Lactobacillus paracasei), this protein is Phosphoglucosamine mutase.